We begin with the raw amino-acid sequence, 102 residues long: Biotrophy-associated secreted protein 4 (102 aa).

A signal peptide spans 1–21; the sequence is MQLSFSAIAILLAFAVNHATA. N36 carries N-linked (GlcNAc...) asparagine glycosylation.

Its subcellular location is the secreted. Its function is as follows. Secreted effector involved in biotrophic colonization of plant cells. Participates in transition from the biotrophic to the necrotrophic phase of Magnaporthe oryzae. Elicits rice basic defense responses during the early stage of interaction and promotes cell death in the late stage of compatible interaction. This chain is Biotrophy-associated secreted protein 4, found in Pyricularia oryzae (strain 70-15 / ATCC MYA-4617 / FGSC 8958) (Rice blast fungus).